The chain runs to 170 residues: Small ribosomal subunit protein uS13 (170 aa).

A compositionally biased stretch (basic residues) spans 128–140; that stretch reads VRHKRGQKVRGQR. Residues 128–170 are disordered; it reads VRHKRGQKVRGQRTKSTGRTEGTIGVNVEAIKEEQAEDGGDEE.

Belongs to the universal ribosomal protein uS13 family. As to quaternary structure, part of the 30S ribosomal subunit. Forms a loose heterodimer with protein S19. Forms two bridges to the 50S subunit in the 70S ribosome.

Its function is as follows. Located at the top of the head of the 30S subunit, it contacts several helices of the 16S rRNA. In the 70S ribosome it contacts the 23S rRNA (bridge B1a) and protein L5 of the 50S subunit (bridge B1b), connecting the 2 subunits; these bridges are implicated in subunit movement. The polypeptide is Small ribosomal subunit protein uS13 (Natronomonas pharaonis (strain ATCC 35678 / DSM 2160 / CIP 103997 / JCM 8858 / NBRC 14720 / NCIMB 2260 / Gabara) (Halobacterium pharaonis)).